The sequence spans 406 residues: O-succinylhomoserine sulfhydrylase (406 aa).

Lys-219 is modified (N6-(pyridoxal phosphate)lysine).

The protein belongs to the trans-sulfuration enzymes family. MetZ subfamily. Homotetramer. Requires pyridoxal 5'-phosphate as cofactor.

The enzyme catalyses O-succinyl-L-homoserine + hydrogen sulfide = L-homocysteine + succinate. The protein operates within amino-acid biosynthesis; L-methionine biosynthesis via de novo pathway; L-homocysteine from O-succinyl-L-homoserine: step 1/1. Its function is as follows. Catalyzes the formation of L-homocysteine from O-succinyl-L-homoserine (OSHS) and hydrogen sulfide. In Mycobacterium tuberculosis (strain CDC 1551 / Oshkosh), this protein is O-succinylhomoserine sulfhydrylase.